We begin with the raw amino-acid sequence, 877 residues long: MAAERYNPRVAEAHWQKVWEENRTFETDNSDSREKYYVLEMFPYPSGRIHMGHVRNYAMGDVVARYKRAKGFNVLHPMGWDAFGMPAENAAMQNKVHPKEWTYQNIATMKRQLKSMGLSLDWSREFATCDVEYYHRQQMLFIDLYEKGLVTRKTSKVNWDPVDNTVLANEQVVDGRGWRSGALVEQRELTQWFFKITDFSEELLAGLDTLDQWPEKVRLMQRNWIGKSEGLQVRFALAAGTAPAGFSEVEVYTTRPDTLFGAAFVAISADHPLAKKLSEGNAALSSFIEECHQQGTSLAALETAEKKGFDTGIKVKHPFDDNWELPVYVANFVLMEYGTGAVFGCPAHDQRDLDFANKYKLKVTPVVLPKGEDAASFSIGETAYTDDGVMINSRFLDGMTPEAAFNEVASRLEKTDLVGRPQAVRKVQFRLRDWGISRQRYWGCPIPMIHCESCGVNPVPRADLPVKLPDDVEFDRPGNPLDRHATWRHVKCPKCGGDARRETDTMDTFVDSSWYYTRFTAPWENEPTDRKAADHWLPVDQYIGGIEHAILHLLYSRFFTRAMKVAGHVGVDEPFKGLFTQGMVVHETYKANGQWVSPADIRIEEIDGKRVATMLDSGAPVEIGSIEKMSKSKKNVVDPDDIIASYGADTARWFVLSDSPPERDVIWTEAGAEGAHRFVQRIWRLVAEAAPALKDVAPKAGTQGEALGVSKAVHKAVKAVGDDIEKLAFNRGVARLYELVNTLSGALQQAADGKADAEMKGALREATEMLVLMTAPMMPHLAEQCLAELGGKVAGKETLVARAPWPVFDPALVVENEIVLPVQINGKKRGDLTIARDADQASIQQAVLELDFVKAALNGGSPKKIIVVPQRIVNVVA.

The short motif at 43 to 53 (PYPSGRIHMGH) is the 'HIGH' region element. The short motif at 628 to 632 (KMSKS) is the 'KMSKS' region element. ATP is bound at residue Lys631.

The protein belongs to the class-I aminoacyl-tRNA synthetase family.

The protein resides in the cytoplasm. The enzyme catalyses tRNA(Leu) + L-leucine + ATP = L-leucyl-tRNA(Leu) + AMP + diphosphate. This is Leucine--tRNA ligase from Brucella abortus biovar 1 (strain 9-941).